Here is a 207-residue protein sequence, read N- to C-terminus: Dephospho-CoA kinase (207 aa).

The 198-residue stretch at Thr-10–Ser-207 folds into the DPCK domain. Gly-18 to Ala-23 provides a ligand contact to ATP.

This sequence belongs to the CoaE family.

The protein localises to the cytoplasm. The catalysed reaction is 3'-dephospho-CoA + ATP = ADP + CoA + H(+). It functions in the pathway cofactor biosynthesis; coenzyme A biosynthesis; CoA from (R)-pantothenate: step 5/5. Its function is as follows. Catalyzes the phosphorylation of the 3'-hydroxyl group of dephosphocoenzyme A to form coenzyme A. This chain is Dephospho-CoA kinase, found in Pseudomonas fluorescens (strain ATCC BAA-477 / NRRL B-23932 / Pf-5).